An 836-amino-acid polypeptide reads, in one-letter code: Taste receptor type 1 member 2 (836 aa).

Residues 1-19 (MGPRAKAVCSLFILLQVLA) form the signal peptide. Topologically, residues 20 to 565 (EPAENSDFYL…AFLEWHEPST (546 aa)) are extracellular. N-linked (GlcNAc...) asparagine glycosylation is found at N84, N292, N312, N351, N427, N479, N486, N526, and N546. Residues 566–586 (IFVVMLTILGFLSTLAIMVIF) traverse the membrane as a helical segment. At 587-601 (WRHLHTPVVRSAGGP) the chain is on the cytoplasmic side. A helical membrane pass occupies residues 602-622 (MCFLMLVPLLLAYAMVPMYIG). At 623–634 (QPTFFSCLWRQT) the chain is on the extracellular side. Residues 635-655 (FFTLCFTICISCITVRSFQIV) traverse the membrane as a helical segment. Topologically, residues 656–680 (CIFKMARRLPRAYGYWVRCHGPYVF) are cytoplasmic. The helical transmembrane segment at 681–701 (VASFMVLKVVIVAGNVLATTA) threads the bilayer. Residues 702–724 (NPTARPDPDDPNIMVLSCNYRRA) are Extracellular-facing. The helical transmembrane segment at 725-745 (LLFNTSLDLLLSVAGFSFAYM) threads the bilayer. Residues 746–757 (GKELPTNYNEAK) lie on the Cytoplasmic side of the membrane. The helical transmembrane segment at 758 to 778 (FITLCMTFYFTSSVSLCTFMS) threads the bilayer. The Extracellular segment spans residues 779–781 (VYD). The chain crosses the membrane as a helical span at residues 782–802 (GVLVTILDLLITVLNLLGISF). The Cytoplasmic portion of the chain corresponds to 803 to 836 (GYFGPKCYMVLFYPERNTQVYFSSMIQGYTMGKD).

This sequence belongs to the G-protein coupled receptor 3 family. TAS1R subfamily. Forms heterodimers with TAS1R3.

It is found in the cell membrane. Its function is as follows. Putative taste receptor. TAS1R2/TAS1R3 recognizes diverse natural and synthetic sweeteners. The sequence is that of Taste receptor type 1 member 2 (TAS1R2) from Canis lupus familiaris (Dog).